A 470-amino-acid polypeptide reads, in one-letter code: Glutamate--tRNA ligase (470 aa).

The short motif at 9–19 (PSPTGFLHVGG) is the 'HIGH' region element. Residues 236 to 240 (RLSKR) carry the 'KMSKS' region motif. Lys-239 is an ATP binding site.

This sequence belongs to the class-I aminoacyl-tRNA synthetase family. Glutamate--tRNA ligase type 1 subfamily. Monomer.

It is found in the cytoplasm. It carries out the reaction tRNA(Glu) + L-glutamate + ATP = L-glutamyl-tRNA(Glu) + AMP + diphosphate. In terms of biological role, catalyzes the attachment of glutamate to tRNA(Glu) in a two-step reaction: glutamate is first activated by ATP to form Glu-AMP and then transferred to the acceptor end of tRNA(Glu). In Legionella pneumophila subsp. pneumophila (strain Philadelphia 1 / ATCC 33152 / DSM 7513), this protein is Glutamate--tRNA ligase.